The chain runs to 334 residues: Ribosomal RNA large subunit methyltransferase F (334 aa).

Positions 1 to 25 (MPRPSSPRPDAERKSASPLHPRNRH) are disordered.

Belongs to the methyltransferase superfamily. METTL16/RlmF family.

The protein localises to the cytoplasm. The catalysed reaction is adenosine(1618) in 23S rRNA + S-adenosyl-L-methionine = N(6)-methyladenosine(1618) in 23S rRNA + S-adenosyl-L-homocysteine + H(+). Specifically methylates the adenine in position 1618 of 23S rRNA. The polypeptide is Ribosomal RNA large subunit methyltransferase F (Pseudomonas paraeruginosa (strain DSM 24068 / PA7) (Pseudomonas aeruginosa (strain PA7))).